Here is a 690-residue protein sequence, read N- to C-terminus: Glycine--tRNA ligase beta subunit (690 aa).

This sequence belongs to the class-II aminoacyl-tRNA synthetase family. As to quaternary structure, tetramer of two alpha and two beta subunits.

It localises to the cytoplasm. It carries out the reaction tRNA(Gly) + glycine + ATP = glycyl-tRNA(Gly) + AMP + diphosphate. In Tolumonas auensis (strain DSM 9187 / NBRC 110442 / TA 4), this protein is Glycine--tRNA ligase beta subunit.